A 122-amino-acid polypeptide reads, in one-letter code: Holo-[acyl-carrier-protein] synthase (122 aa).

Residues Asp8 and Glu52 each coordinate Mg(2+).

It belongs to the P-Pant transferase superfamily. AcpS family. The cofactor is Mg(2+).

The protein resides in the cytoplasm. The catalysed reaction is apo-[ACP] + CoA = holo-[ACP] + adenosine 3',5'-bisphosphate + H(+). Transfers the 4'-phosphopantetheine moiety from coenzyme A to a Ser of acyl-carrier-protein. This is Holo-[acyl-carrier-protein] synthase from Lachnoclostridium phytofermentans (strain ATCC 700394 / DSM 18823 / ISDg) (Clostridium phytofermentans).